The chain runs to 338 residues: Thiamine thiazole synthase (338 aa).

Residues 1 to 43 are disordered; sequence MSPVATESMYKPTTINQTAHQQAMDPLKSKQQSNATVNKPAFK. Positions 11–21 are enriched in polar residues; that stretch reads KPTTINQTAHQ. Residues alanine 91, 112–113, glycine 120, and cysteine 185 each bind substrate; that span reads ES. Cysteine 221 carries the post-translational modification 2,3-didehydroalanine (Cys). Residues aspartate 223, histidine 238, methionine 290, and 300 to 302 contribute to the substrate site; that span reads RMG.

It belongs to the THI4 family. Homooctamer. Requires Fe cation as cofactor. In terms of processing, during the catalytic reaction, a sulfide is transferred from Cys-221 to a reaction intermediate, generating a dehydroalanine residue. In terms of tissue distribution, highly expressed in haustoria, and only in low amounts in intercellular hyphae. Found in the basal hyphae of the uredia, but not in the pedicels and only at very low levels in uredospores.

It localises to the cytoplasm. Its subcellular location is the nucleus. It carries out the reaction [ADP-thiazole synthase]-L-cysteine + glycine + NAD(+) = [ADP-thiazole synthase]-dehydroalanine + ADP-5-ethyl-4-methylthiazole-2-carboxylate + nicotinamide + 3 H2O + 2 H(+). Its function is as follows. Involved in biosynthesis of the thiamine precursor thiazole. Catalyzes the conversion of NAD and glycine to adenosine diphosphate 5-(2-hydroxyethyl)-4-methylthiazole-2-carboxylic acid (ADT), an adenylated thiazole intermediate. The reaction includes an iron-dependent sulfide transfer from a conserved cysteine residue of the protein to a thiazole intermediate. The enzyme can only undergo a single turnover, which suggests it is a suicide enzyme. May have additional roles in adaptation to various stress conditions and in DNA damage tolerance. The protein is Thiamine thiazole synthase (THI2) of Uromyces fabae (Rust fungus).